The following is a 429-amino-acid chain: Adenylosuccinate synthetase (429 aa).

GTP contacts are provided by residues 12-18 (GDEGKGK) and 40-42 (GHT). Catalysis depends on D13, which acts as the Proton acceptor. Mg(2+)-binding residues include D13 and G40. IMP contacts are provided by residues 13–16 (DEGK), 38–41 (NAGH), T128, R142, Q223, T238, and R302. The active-site Proton donor is H41. Residue 298–304 (VNTGRPR) participates in substrate binding. GTP is bound by residues R304, 330 to 332 (KLD), and 412 to 414 (GVG).

Belongs to the adenylosuccinate synthetase family. Homodimer. It depends on Mg(2+) as a cofactor.

The protein localises to the cytoplasm. The catalysed reaction is IMP + L-aspartate + GTP = N(6)-(1,2-dicarboxyethyl)-AMP + GDP + phosphate + 2 H(+). Its pathway is purine metabolism; AMP biosynthesis via de novo pathway; AMP from IMP: step 1/2. Its function is as follows. Plays an important role in the de novo pathway of purine nucleotide biosynthesis. Catalyzes the first committed step in the biosynthesis of AMP from IMP. This chain is Adenylosuccinate synthetase, found in Arthrobacter sp. (strain FB24).